Consider the following 356-residue polypeptide: Transcription factor ATOH1 (356 aa).

The span at 1–21 shows a compositional bias: basic and acidic residues; sequence MSRLLHAEEWAEVKELGDHHR. Disordered regions lie at residues 1–56 and 92–125; these read MSRL…PELS and SEAA…GPVK. The span at 26–40 shows a compositional bias: pro residues; it reads HHLPQPPPPPPPQPP. Residues 96-109 show a composition bias toward basic and acidic residues; that stretch reads APRDEVDGRGELVR. The span at 110-124 shows a compositional bias: low complexity; sequence RSSGGASSSKSPGPV. One can recognise a bHLH domain in the interval 161 to 213; sequence QRRLAANARERRRMHGLNHAFDQLRNVIPSFNNDKKLSKYETLQMAQIYINAL. Disordered regions lie at residues 218–279 and 314–356; these read QTPS…TRFS and SPSL…DEAS. Low complexity predominate over residues 252–266; it reads NATAAGAQQASGGSQ. Positions 337–356 are enriched in basic and acidic residues; it reads HRSDGEFSPHSHYSDSDEAS.

Efficient DNA binding requires dimerization with another bHLH protein.

It localises to the nucleus. In terms of biological role, transcriptional regulator. Activates E box-dependent transcription in collaboration with TCF3/E47, but the activity is completely antagonized by the negative regulator of neurogenesis HES1. Plays a role in the differentiation of subsets of neural cells by activating E box-dependent transcription. The chain is Transcription factor ATOH1 from Pan troglodytes (Chimpanzee).